Here is a 760-residue protein sequence, read N- to C-terminus: Rho GTPase-activating protein 26 (760 aa).

A BAR domain is found at 7–262 (EFSECCLDSP…MKENPHEHKN (256 aa)). Residues 265 to 369 (PYTMEGYLYV…WMEAMDGREP (105 aa)) form the PH domain. The region spanning 383 to 568 (AQLDSIGFSI…ILIENHEKIF (186 aa)) is the Rho-GAP domain. 2 disordered regions span residues 571–617 (VPET…ESRN) and 658–701 (PNRP…SPIS). Residues 605-617 (HTAQPNEKQESRN) are compositionally biased toward polar residues. Over residues 674–701 (LSPSWPMFSAPSSPMPTSSTSSDSSPIS) the composition is skewed to low complexity. The 59-residue stretch at 702 to 760 (SPLRKARALYACKAEHDSELSFTAGTVFDNVHPSQEPGWLEGTLNGKTGLIPENYVEFL) folds into the SH3 domain.

As to quaternary structure, binds to the C-terminus of PTK2/FAK1. As to expression, detected in embryonic brain and liver, and at low levels in embryonic eye, heart, lung, intestine and skeletal muscle.

It localises to the cell junction. It is found in the focal adhesion. The protein localises to the cytoplasm. Its subcellular location is the cytoskeleton. The protein resides in the endosome membrane. Functionally, GTPase-activating protein for RHOA and CDC42. May be involved in the regulation of neosynthesized protein export through a Rab-endososomal dependent export route. This chain is Rho GTPase-activating protein 26 (ARHGAP26), found in Gallus gallus (Chicken).